The following is a 130-amino-acid chain: Protein ApaG (130 aa).

The ApaG domain maps to 3 to 127 (RAITRNIQVT…FSLDVPDVRR (125 aa)).

This chain is Protein ApaG, found in Xanthobacter autotrophicus (strain ATCC BAA-1158 / Py2).